Here is a 417-residue protein sequence, read N- to C-terminus: Glutamyl-tRNA reductase (417 aa).

Substrate is bound by residues 48–51, Ser100, 105–107, and Gln111; these read TCNR and EDQ. The active-site Nucleophile is Cys49. 180–185 contacts NADP(+); that stretch reads GAGETG.

It belongs to the glutamyl-tRNA reductase family. Homodimer.

The enzyme catalyses (S)-4-amino-5-oxopentanoate + tRNA(Glu) + NADP(+) = L-glutamyl-tRNA(Glu) + NADPH + H(+). It participates in porphyrin-containing compound metabolism; protoporphyrin-IX biosynthesis; 5-aminolevulinate from L-glutamyl-tRNA(Glu): step 1/2. In terms of biological role, catalyzes the NADPH-dependent reduction of glutamyl-tRNA(Glu) to glutamate 1-semialdehyde (GSA). The sequence is that of Glutamyl-tRNA reductase from Methanothrix thermoacetophila (strain DSM 6194 / JCM 14653 / NBRC 101360 / PT) (Methanosaeta thermophila).